The chain runs to 355 residues: Green-sensitive opsin (355 aa).

Over methionine 1–lysine 36 the chain is Extracellular. Asparagine 2 and asparagine 15 each carry an N-linked (GlcNAc...) asparagine glycan. A helical transmembrane segment spans residues tyrosine 37–valine 61. The Cytoplasmic portion of the chain corresponds to threonine 62–asparagine 73. The helical transmembrane segment at tyrosine 74–tryptophan 99 threads the bilayer. Topologically, residues asparagine 100–glutamate 113 are extracellular. A disulfide bridge connects residues cysteine 110 and cysteine 187. The chain crosses the membrane as a helical span at residues glycine 114–isoleucine 133. At glutamate 134–histidine 152 the chain is on the cytoplasmic side. The chain crosses the membrane as a helical span at residues alanine 153–serine 176. Residues arginine 177–serine 202 are Extracellular-facing. The helical transmembrane segment at tyrosine 203–valine 230 threads the bilayer. The Cytoplasmic portion of the chain corresponds to arginine 231–arginine 252. The chain crosses the membrane as a helical span at residues methionine 253–phenylalanine 276. At threonine 277 to threonine 284 the chain is on the extracellular side. The helical transmembrane segment at alanine 285–methionine 309 threads the bilayer. Lysine 296 bears the N6-(retinylidene)lysine mark. The Cytoplasmic portion of the chain corresponds to asparagine 310 to alanine 355.

It belongs to the G-protein coupled receptor 1 family. Opsin subfamily. Post-translationally, phosphorylated on some or all of the serine and threonine residues present in the C-terminal region. The color pigments are found in the cone photoreceptor cells.

It localises to the membrane. In terms of biological role, visual pigments are the light-absorbing molecules that mediate vision. They consist of an apoprotein, opsin, covalently linked to cis-retinal. The polypeptide is Green-sensitive opsin (PRA1) (Gallus gallus (Chicken)).